A 572-amino-acid polypeptide reads, in one-letter code: MSVKISGKDYAGMYGPTKGDRVRLADTDLIIEIEEDYTVYGDECKFGGGKSIRDGMGQSPSAARDDKVLDLVITNAIIFDTWGIVKGDIGIKDGKIAGIGKAGNPKVMSGVSEDLIIGASTEVITGEGLIVTPGGIDTHIHFICPQQIETALFSGITTMIGGGTGPADGTNATTCTPGAFNIRKMLEAAEDFPVNLGFLGKGNASFETPLIEQIEAGAIGLKLHEDWGTTPKAIDTCLKVADLFDVQVAIHTDTLNEAGFVENTIAAIAGRTIHTYHTEGAGGGHAPDIIKIASRMNVLPSSTNPTMPFTVNTLDEHLDMLMVCHHLDSKVKEDVAFADSRIRPETIAAEDILHDMGVFSMMSSDSQAMGRVGEVIIRTWQTAHKMKLQRGALPGEKSGCDNIRAKRYLAKYTINPAITHGISQYVGSLEKGKIADLVLWKPAMFGVKPEMIIKGGFIIAGRMGDANASIPTPQPVIYKNMFGAFGKAKYGTCVTFVSKASLENGVVEKMGLQRKVLPVQGCRNISKKYMVHNNATPEIEVDPETYEVKVDGEIITCEPLKVLPMAQRYFLF.

Residues His-139, His-141, and Lys-222 each contribute to the Ni(2+) site. N6-carboxylysine is present on Lys-222. His-224 contributes to the substrate binding site. His-251 and His-277 together coordinate Ni(2+). The Proton donor role is filled by His-325. Asp-365 contacts Ni(2+).

The protein belongs to the metallo-dependent hydrolases superfamily. Urease alpha subunit family. In terms of assembly, heterotrimer of UreA (gamma), UreB (beta) and UreC (alpha) subunits. Three heterotrimers associate to form the active enzyme. Ni cation serves as cofactor. In terms of processing, carboxylation allows a single lysine to coordinate two nickel ions.

Its subcellular location is the cytoplasm. The catalysed reaction is urea + 2 H2O + H(+) = hydrogencarbonate + 2 NH4(+). The protein operates within nitrogen metabolism; urea degradation; CO(2) and NH(3) from urea (urease route): step 1/1. This is Urease subunit alpha from Acetivibrio thermocellus (strain ATCC 27405 / DSM 1237 / JCM 9322 / NBRC 103400 / NCIMB 10682 / NRRL B-4536 / VPI 7372) (Clostridium thermocellum).